We begin with the raw amino-acid sequence, 701 residues long: Aryl hydrocarbon receptor repressor (701 aa).

The disordered stretch occupies residues 1-38; the sequence is MMIPSGECTYAGRKRRKPIQKRRLTMGTEKSNPSKRHR. A compositionally biased stretch (basic residues) spans 12 to 24; it reads GRKRRKPIQKRRL. In terms of domain architecture, bHLH spans 25 to 78; it reads TMGTEKSNPSKRHRDRLNTELDHLASLLPFSPDIISKLDKLSVLRLSVSYLRVK. The PAS domain maps to 106 to 176; that stretch reads PVQEGRLLLE…RQLHWAMDPP (71 aa). Disordered regions lie at residues 360-389 and 409-436; these read DPKG…QREM and TEQR…LVPH. Residues 365 to 375 show a composition bias toward basic and acidic residues; the sequence is SGDREEDDQKH. Over residues 414 to 430 the composition is skewed to polar residues; sequence QEGTTKLTRQPSKSEPS. Residues 555-701 are needed for transcriptional repression; that stretch reads ASTTSCVWLG…SKGSDGIFLP (147 aa). Residues lysine 583 and lysine 660 each participate in a glycyl lysine isopeptide (Lys-Gly) (interchain with G-Cter in SUMO2) cross-link.

In terms of assembly, interacts with ARNT, ANKRA2, HDAC4 and HDAC5. Interacts with ARNT; forms a heterodimer with ARNT. In terms of tissue distribution, highly expressed in testis and weakly expressed in heart and liver. Highly expressed in small intestine and cecum in a male-dominant sexual dimorphic fashion.

Its subcellular location is the cytoplasm. It localises to the nucleus. Mediates dioxin toxicity and is involved in regulation of cell growth and differentiation. Represses the transcription activity of AHR by competing with this transcription factor for heterodimer formation with the ARNT and subsequently binding to the xenobiotic response element (XRE) sequence present in the promoter regulatory region of variety of genes. Represses CYP1A1 by binding the XRE sequence and recruiting ANKRA2, HDAC4 and/or HDAC5. Autoregulates its expression by associating with its own XRE site. The polypeptide is Aryl hydrocarbon receptor repressor (Ahrr) (Rattus norvegicus (Rat)).